We begin with the raw amino-acid sequence, 112 residues long: HTH-type transcriptional regulator YodB (112 aa).

The HTH hxlR-type domain occupies 6 to 105 (CPKMESAFSL…WADQFCEPGD (100 aa)).

In terms of biological role, negatively regulates yodC and azoR1 which may contribute to the degradation of aromatic compounds. Probably positively regulates the catechol-specific transcription of mhqNOP, mhqED, and mhqA. The protein is HTH-type transcriptional regulator YodB (yodB) of Bacillus subtilis (strain 168).